We begin with the raw amino-acid sequence, 443 residues long: Phosphoglucosamine mutase (443 aa).

The Phosphoserine intermediate role is filled by Ser101. Residues Ser101, Asp239, Asp241, and Asp243 each contribute to the Mg(2+) site. A Phosphoserine modification is found at Ser101.

Belongs to the phosphohexose mutase family. Requires Mg(2+) as cofactor. Post-translationally, activated by phosphorylation.

It carries out the reaction alpha-D-glucosamine 1-phosphate = D-glucosamine 6-phosphate. In terms of biological role, catalyzes the conversion of glucosamine-6-phosphate to glucosamine-1-phosphate. This chain is Phosphoglucosamine mutase, found in Francisella tularensis subsp. novicida (strain U112).